A 262-amino-acid polypeptide reads, in one-letter code: Probable aminoglycoside 3'-phosphotransferase (262 aa).

Asp187 functions as the Proton acceptor in the catalytic mechanism.

The protein belongs to the aminoglycoside phosphotransferase family.

The catalysed reaction is kanamycin A + ATP = kanamycin 3'-phosphate + ADP + H(+). The protein is Probable aminoglycoside 3'-phosphotransferase (ymdC) of Lactococcus lactis subsp. lactis (strain IL1403) (Streptococcus lactis).